The sequence spans 146 residues: Ribosome-binding factor A (146 aa).

The tract at residues 127 to 146 is disordered; that stretch reads EFAGEADPYKKPEDDEAAES.

This sequence belongs to the RbfA family. In terms of assembly, monomer. Binds 30S ribosomal subunits, but not 50S ribosomal subunits or 70S ribosomes.

The protein resides in the cytoplasm. In terms of biological role, one of several proteins that assist in the late maturation steps of the functional core of the 30S ribosomal subunit. Associates with free 30S ribosomal subunits (but not with 30S subunits that are part of 70S ribosomes or polysomes). Required for efficient processing of 16S rRNA. May interact with the 5'-terminal helix region of 16S rRNA. In Renibacterium salmoninarum (strain ATCC 33209 / DSM 20767 / JCM 11484 / NBRC 15589 / NCIMB 2235), this protein is Ribosome-binding factor A.